A 102-amino-acid chain; its full sequence is Auxin-responsive protein SAUR68 (102 aa).

Belongs to the ARG7 family.

Its subcellular location is the cell membrane. In terms of biological role, may promote auxin-stimulated organ elongation, such as hypocotyls, stamen filaments and petals. In Arabidopsis thaliana (Mouse-ear cress), this protein is Auxin-responsive protein SAUR68.